Reading from the N-terminus, the 551-residue chain is Cytochrome P450 monooxygenase abl5 (551 aa).

Asn-24 carries an N-linked (GlcNAc...) asparagine glycan. The chain crosses the membrane as a helical span at residues 37 to 57 (VVLNTLTAIVVVWICYRAVIY). Asn-174, Asn-218, Asn-283, Asn-307, and Asn-441 each carry an N-linked (GlcNAc...) asparagine glycan. Cys-495 serves as a coordination point for heme.

The protein belongs to the cytochrome P450 family. The cofactor is heme.

Its subcellular location is the membrane. In terms of biological role, cytochrome P450 monooxygenase; part of the gene cluster that mediates the biosynthesis of abscisic acid (ABA), a phytohormone that acts antagonistically toward salicylic acid (SA), jasmonic acid (JA) and ethylene (ETH) signaling, to impede plant defense responses. The first step of the pathway catalyzes the reaction from farnesyl diphosphate to alpha-ionylideneethane performed by the alpha-ionylideneethane synthase abl3 via a three-step reaction mechanism involving 2 neutral intermediates, beta-farnesene and allofarnesene. The cytochrome P450 monooxygenase abl1 might then be involved in the conversion of alpha-ionylideneethane to alpha-ionylideneacetic acid. Alpha-ionylideneacetic acid is further converted to abscisic acid in 2 steps involving the cytochrome P450 monooxygenase abl2 and the short-chain dehydrogenase/reductase abl4, via the intermediates 1'-deoxy-ABA or 1',4'-trans-diol-ABA, depending on the order of action of these 2 enzymes. Abl2 is responsible for the hydroxylation of carbon atom C-1' and abl4 might be involved in the oxidation of the C-4' carbon atom. The cytochrome monooxygenase abl5 seems not essential for the biosynthesis of ABA and its function remains to be identified. The protein is Cytochrome P450 monooxygenase abl5 of Leptosphaeria maculans (strain JN3 / isolate v23.1.3 / race Av1-4-5-6-7-8) (Blackleg fungus).